The following is a 215-amino-acid chain: 7-cyano-7-deazaguanine synthase (215 aa).

8–18 lines the ATP pocket; sequence LSAGLDSTVSL. Zn(2+)-binding residues include cysteine 191, cysteine 199, cysteine 202, and cysteine 205.

Belongs to the QueC family. In terms of assembly, homodimer. Requires Zn(2+) as cofactor.

The catalysed reaction is 7-carboxy-7-deazaguanine + NH4(+) + ATP = 7-cyano-7-deazaguanine + ADP + phosphate + H2O + H(+). It functions in the pathway purine metabolism; 7-cyano-7-deazaguanine biosynthesis. Functionally, catalyzes the ATP-dependent conversion of 7-carboxy-7-deazaguanine (CDG) to 7-cyano-7-deazaguanine (preQ(0)). This Carboxydothermus hydrogenoformans (strain ATCC BAA-161 / DSM 6008 / Z-2901) protein is 7-cyano-7-deazaguanine synthase.